Consider the following 232-residue polypeptide: Cytidylate kinase (232 aa).

10 to 18 lines the ATP pocket; sequence GPAASGKST.

It belongs to the cytidylate kinase family. Type 1 subfamily.

Its subcellular location is the cytoplasm. It catalyses the reaction CMP + ATP = CDP + ADP. The catalysed reaction is dCMP + ATP = dCDP + ADP. This chain is Cytidylate kinase, found in Phytoplasma mali (strain AT).